Reading from the N-terminus, the 110-residue chain is Chorion class B protein M2410 (110 aa).

4 tandem repeats follow at residues Tyr1 to Leu4, Gly5 to Leu9, Gly10 to Leu14, and Gly15 to Leu19. The segment at Tyr1–Leu19 is 4 X 5 AA tandem repeats of G-Y-G-G-L. Residues Tyr1–Phe27 are left arm. Positions Ser28–Glu96 are central domain. Positions Gly97–Gly110 are right arm (Gly-rich tandem repeats).

The protein belongs to the chorion protein family.

In terms of biological role, this protein is one of many from the eggshell of the silk moth. The sequence is that of Chorion class B protein M2410 from Bombyx mori (Silk moth).